A 474-amino-acid chain; its full sequence is MESKALLLVVLGVWLQSLTAFRGGVAAADAGRDFSDIESKFALRTPEDTAEDTCHLIPGLADSVSNCHFNHSSKTFVVIHGWTVTGMYESWVPKLVAALYKREPDSNVIVVDWLYRAQQHYPVSAGYTKLVGNDVARFINWMEEEFNYPLDNVHLLGYSLGAHAAGVAGSLTNKKVNRITGLDPAGPNFEYAEAPSRLSPDDADFVDVLHTFTRGSPGRSIGIQKPVGHVDIYPNGGTFQPGCNIGEAIRVIAERGLGDVDQLVKCSHERSIHLFIDSLLNEENPSKAYRCNSKEAFEKGLCLSCRKNRCNNLGYEINKVRAKRSSKMYLKTRSQMPYKVFHYQVKIHFSGTEDGKQHNQAFEISLYGTVAESENIPFTLPEVSTNKTYSFLIYTEVDIGELLMMKLKWISDSYFSWPDWWSSPSFVIERIRVKAGETQKKVIFCAREKVSHLQKGKDSAVFVKCHDKSLKKSG.

The signal sequence occupies residues 1–27 (MESKALLLVVLGVWLQSLTAFRGGVAA). Residues 32 to 53 (RDFSDIESKFALRTPEDTAEDT) form an interaction with GPIHBP1 region. An intrachain disulfide couples Cys54 to Cys67. Residue Asn70 is glycosylated (N-linked (GlcNAc...) asparagine). The residue at position 121 (Tyr121) is a 3'-nitrotyrosine. The Nucleophile role is filled by Ser159. Asp183 serves as the catalytic Charge relay system. Position 191 is a 3'-nitrotyrosine (Tyr191). The Ca(2+) site is built by Ala194, Arg197, Ser199, and Asp202. The cysteines at positions 243 and 266 are disulfide-linked. The interval 243 to 266 (CNIGEAIRVIAERGLGDVDQLVKC) is essential for determining substrate specificity. The active-site Charge relay system is His268. 2 disulfide bridges follow: Cys291/Cys310 and Cys302/Cys305. The PLAT domain occupies 341–464 (FHYQVKIHFS…KGKDSAVFVK (124 aa)). Residue Tyr343 is modified to 3'-nitrotyrosine. The N-linked (GlcNAc...) asparagine glycan is linked to Asn386. The important for interaction with lipoprotein particles stretch occupies residues 417–421 (WPDWW). Residues 430–434 (RIRVK) are important for heparin binding. An interaction with GPIHBP1 region spans residues 443-467 (IFCAREKVSHLQKGKDSAVFVKCHD). Cys445 and Cys465 form a disulfide bridge.

It belongs to the AB hydrolase superfamily. Lipase family. As to quaternary structure, homodimer. Interacts with GPIHBP1 with 1:1 stoichiometry. Interacts with APOC2; the interaction activates LPL activity in the presence of lipids. Interaction with heparan sulfate proteoglycans is required to protect LPL against loss of activity. Associates with lipoprotein particles in blood plasma. Interacts with LMF1 and SEL1L; interaction with SEL1L is required to prevent aggregation of newly synthesized LPL in the endoplasmic reticulum (ER), and for normal export of LPL from the ER to the extracellular space. Interacts with SORL1; SORL1 acts as a sorting receptor, promoting LPL localization to endosomes and later to lysosomes, leading to degradation of newly synthesized LPL. Post-translationally, tyrosine nitration after lipopolysaccharide (LPS) challenge down-regulates the lipase activity. N-glycosylated. In terms of tissue distribution, detected in white and brown adipose tissue and heart muscle, especially at the lumenal surface of capillaries. Detected on capillary endothelium in the lactating mammary gland. Detected in blood plasma (at protein level). Expressed in liver, epididymal fat, heart, psoas muscle, lactating mammary gland, adrenal, lung, and ovary. Highest levels in heart and adrenal gland.

Its subcellular location is the cell membrane. It is found in the secreted. It localises to the extracellular space. The protein localises to the extracellular matrix. It carries out the reaction a triacylglycerol + H2O = a diacylglycerol + a fatty acid + H(+). It catalyses the reaction a 1,2-diacyl-sn-glycero-3-phosphocholine + H2O = a 2-acyl-sn-glycero-3-phosphocholine + a fatty acid + H(+). The catalysed reaction is 1,2,3-tri-(9Z-octadecenoyl)-glycerol + H2O = di-(9Z)-octadecenoylglycerol + (9Z)-octadecenoate + H(+). The enzyme catalyses 1,2-di-(9Z-octadecenoyl)-sn-glycero-3-phosphocholine + H2O = (9Z-octadecenoyl)-sn-glycero-3-phosphocholine + (9Z)-octadecenoate + H(+). It carries out the reaction 1,2,3-tributanoylglycerol + H2O = dibutanoylglycerol + butanoate + H(+). It catalyses the reaction 1,2-dihexadecanoyl-sn-glycero-3-phosphocholine + H2O = hexadecanoyl-sn-glycero-3-phosphocholine + hexadecanoate + H(+). Its activity is regulated as follows. The apolipoprotein APOC2 acts as a coactivator of LPL activity. Ca(2+) binding promotes protein stability and formation of the active homodimer. Interaction with GPIHBP1 protects LPL against inactivation by ANGPTL4. Its function is as follows. Key enzyme in triglyceride metabolism. Catalyzes the hydrolysis of triglycerides from circulating chylomicrons and very low density lipoproteins (VLDL), and thereby plays an important role in lipid clearance from the blood stream, lipid utilization and storage. Although it has both phospholipase and triglyceride lipase activities it is primarily a triglyceride lipase with low but detectable phospholipase activity. Mediates margination of triglyceride-rich lipoprotein particles in capillaries. Recruited to its site of action on vascular endothelium by binding to GPIHBP1 and cell surface heparan sulfate proteoglycans. In Mus musculus (Mouse), this protein is Lipoprotein lipase (Lpl).